A 471-amino-acid chain; its full sequence is 5-hydroxytryptamine receptor 2A (471 aa).

Over 1 to 80 the chain is Extracellular; sequence MEILCEDNIS…LQEKNWSALL (80 aa). Asn-8, Asn-38, Asn-44, Asn-51, and Asn-54 each carry an N-linked (GlcNAc...) asparagine glycan. The chain crosses the membrane as a helical span at residues 81–97; it reads TTVVIILTIAGNILVIM. The Cytoplasmic portion of the chain corresponds to 98–111; it reads AVSLEKKLQNATNY. The helical transmembrane segment at 112 to 137 threads the bilayer; that stretch reads FLMSLAIADMLLGFLVMPVSMLTILY. Residues 138-146 are Extracellular-facing; the sequence is GYRWPLPSK. A helical membrane pass occupies residues 147 to 171; that stretch reads LCAIWIYLDVLFSTASIMHLCAISL. A disulfide bond links Cys-148 and Cys-227. Residue Asp-155 participates in serotonin binding. Positions 172–174 match the DRY motif; important for ligand-induced conformation changes motif; that stretch reads DRY. At 172 to 191 the chain is on the cytoplasmic side; sequence DRYVAIQNPIHHSRFNSRTK. The chain crosses the membrane as a helical span at residues 192–215; sequence AFLKIIAVWTISVGISMPIPVFGL. The Extracellular portion of the chain corresponds to 216-232; the sequence is QDDSKVFKEGSCLLADD. A helical transmembrane segment spans residues 233–258; the sequence is NFVLIGSFVAFFIPLTIMVITYFLTI. Topologically, residues 259–322 are cytoplasmic; that stretch reads KSLQKEATLC…QSISNEQKAC (64 aa). Ser-280 carries the post-translational modification Phosphoserine. Residues 323–348 traverse the membrane as a helical segment; sequence KVLGIVFFLFVVMWCPFFITNIMAVI. Asn-343 is a binding site for serotonin. A disulfide bridge links Cys-349 with Cys-353. Residues 349-356 are Extracellular-facing; it reads CKESCNEN. The helical transmembrane segment at 357–382 threads the bilayer; that stretch reads VIGALLNVFVWIGYLSSAVNPLVYTL. An NPxxY motif; important for ligand-induced conformation changes and signaling motif is present at residues 376-380; the sequence is NPLVY. The Cytoplasmic segment spans residues 383 to 471; that stretch reads FNKTYRSAFS…ETVNEKVSCV (89 aa). The PDZ-binding motif lies at 469–471; it reads SCV.

Belongs to the G-protein coupled receptor 1 family. As to quaternary structure, interacts (via C-terminus) with MPDZ and PATJ. May interact (via C-terminus) with MPP3, PRDX6, DLG4, DLG1, CASK, APBA1 and MAGI2. Interacts with GRM2 and DRD2; this may affect signaling. Detected in adult intestine, especially in mucosal epithelium, longitudinal and circular layers of muscularis externa and myenteric plexuses. Highly expressed in Paneth cells, and detected at lower levels in enterocytes (at protein level). Detected in brain cortex.

The protein localises to the cell membrane. It is found in the cell projection. The protein resides in the axon. Its subcellular location is the cytoplasmic vesicle. It localises to the membrane. The protein localises to the caveola. It is found in the dendrite. The protein resides in the presynapse. With respect to regulation, G-protein coupled receptor activity is regulated by lipids: oleamide increases HTR2A-mediated activity. Its function is as follows. G-protein coupled receptor for 5-hydroxytryptamine (serotonin). Also functions as a receptor for various drugs and psychoactive substances, including mescaline, psilocybin, 1-(2,5-dimethoxy-4-iodophenyl)-2-aminopropane (DOI) and lysergic acid diethylamide (LSD). Ligand binding causes a conformation change that triggers signaling via guanine nucleotide-binding proteins (G proteins) and modulates the activity of downstream effectors. HTR2A is coupled to G(q)/G(11) G alpha proteins and activates phospholipase C-beta, releasing diacylglycerol (DAG) and inositol 1,4,5-trisphosphate (IP3) second messengers that modulate the activity of phosphatidylinositol 3-kinase and promote the release of Ca(2+) ions from intracellular stores, respectively. Beta-arrestin family members inhibit signaling via G proteins and mediate activation of alternative signaling pathways. Affects neural activity, perception, cognition and mood. Plays a role in the regulation of behavior, including responses to anxiogenic situations and psychoactive substances. Plays a role in intestinal smooth muscle contraction, and may play a role in arterial vasoconstriction. In Rattus norvegicus (Rat), this protein is 5-hydroxytryptamine receptor 2A (Htr2a).